Reading from the N-terminus, the 393-residue chain is MLSRTIRTQGSFLRRSQLTITRSFSVTFNMQNAQKRSPTGIVLMNMGGPSKVEETYDFLYQLFADNDLIPISAKYQKTIAKYIAKFRTPKIEKQYREIGGGSPIRKWSEYQATEVCKILDKTCPETAPHKPYVAFRYAKPLTAETYKQMLKDGVKKAVAFSQYPHFSYSTTGSSINELWRQIKALDSERSISWSVIDRWPTNEGLIKAFSENITKKLQEFPQPVRDKVVLLFSAHSLPMDVVNTGDAYPAEVAATVYNIMQKLKFKNPYRLVWQSQVGPKPWLGAQTAEIAEFLGPKVDGLMFIPIAFTSDHIETLHEIDLGVIGESEYKDKFKRCESLNGNQTFIEGMADLVKSHLQSNQLYSNQLPLDFALGKSNDPVKDLSLVFGNHEST.

The N-terminal 31 residues, 1–31, are a transit peptide targeting the mitochondrion; the sequence is MLSRTIRTQGSFLRRSQLTITRSFSVTFNMQ. Asp351 is an active-site residue.

It belongs to the ferrochelatase family. The leader peptide may be processed in two proteolytic steps, first between Ser-23 and Phe-24, second and by a different protease, to yield the mature protein.

Its subcellular location is the mitochondrion inner membrane. It carries out the reaction heme b + 2 H(+) = protoporphyrin IX + Fe(2+). The protein operates within porphyrin-containing compound metabolism; protoheme biosynthesis; protoheme from protoporphyrin-IX: step 1/1. Its function is as follows. Catalyzes the ferrous insertion into protoporphyrin IX. This Saccharomyces cerevisiae (strain ATCC 204508 / S288c) (Baker's yeast) protein is Ferrochelatase, mitochondrial (HEM15).